The chain runs to 511 residues: uncharacterized protein (511 aa).

This is an uncharacterized protein from Acanthamoeba polyphaga (Amoeba).